A 613-amino-acid polypeptide reads, in one-letter code: Pheromone-processing carboxypeptidase kex1 (613 aa).

Residues 1–19 form the signal peptide; the sequence is MTMSFCALLFFLIISPTLA. Over 20–506 the chain is Lumenal; the sequence is ATKSAADYYV…KETEWKAYAK (487 aa). Asn-102 and Asn-109 each carry an N-linked (GlcNAc...) asparagine glycan. Catalysis depends on residues Ser-173 and Asp-373. N-linked (GlcNAc...) asparagine glycosylation is found at Asn-424 and Asn-432. The active site involves His-435. The interval 463–490 is disordered; sequence QPADSRIDGEKLPQTSVGGHPNSTAAEQ. Over residues 475 to 489 the composition is skewed to polar residues; that stretch reads PQTSVGGHPNSTAAE. Asn-484 carries an N-linked (GlcNAc...) asparagine glycan. Residues 507–527 form a helical membrane-spanning segment; that stretch reads SGEAALIVVIIGVTVWGFFIW. The Cytoplasmic portion of the chain corresponds to 528 to 613; it reads RSRRRNRGYE…ASSREDGTHP (86 aa). Residues 559–613 form a disordered region; sequence GAGDVEAGDFDESELDTLHSPGLERENYAVGDDSDEDDPNHPRPTASSREDGTHP. The span at 564-573 shows a compositional bias: acidic residues; that stretch reads EAGDFDESEL.

It belongs to the peptidase S10 family.

Its subcellular location is the golgi apparatus. It is found in the trans-Golgi network membrane. The enzyme catalyses Preferential release of a C-terminal arginine or lysine residue.. Protease with a carboxypeptidase B-like function involved in the C-terminal processing of the lysine and arginine residues from protein precursors. Promotes cell fusion and is involved in the programmed cell death. The chain is Pheromone-processing carboxypeptidase kex1 (kex1) from Aspergillus clavatus (strain ATCC 1007 / CBS 513.65 / DSM 816 / NCTC 3887 / NRRL 1 / QM 1276 / 107).